The following is a 373-amino-acid chain: Maltose/maltodextrin import ATP-binding protein MalK (373 aa).

The region spanning 4 to 234 (VTLKNVCKAY…PQNRFVAGFI (231 aa)) is the ABC transporter domain. 36–43 (GPSGCGKS) is a binding site for ATP.

Belongs to the ABC transporter superfamily. Maltooligosaccharide importer (TC 3.A.1.1.1) family. As to quaternary structure, the complex is composed of two ATP-binding proteins (MalK), two transmembrane proteins (MalG and MalK) and a solute-binding protein (MalE).

The protein localises to the cell inner membrane. It carries out the reaction D-maltose(out) + ATP + H2O = D-maltose(in) + ADP + phosphate + H(+). Functionally, part of the ABC transporter complex MalEFGK involved in maltose/maltodextrin import. Responsible for energy coupling to the transport system. In Vibrio cholerae serotype O1 (strain ATCC 39315 / El Tor Inaba N16961), this protein is Maltose/maltodextrin import ATP-binding protein MalK.